A 410-amino-acid chain; its full sequence is D-amino acid dehydrogenase (410 aa).

9–14 (GGGIVG) is an FAD binding site.

It belongs to the DadA oxidoreductase family. The cofactor is FAD.

The protein resides in the cell inner membrane. It catalyses the reaction a D-alpha-amino acid + a quinone + H2O = a 2-oxocarboxylate + a quinol + NH4(+). Catalyzes the oxidative deamination of D-amino acids. Has broad substrate specificity; is mostly active on D-proline, and to a lesser extent, on several other D-amino acids such as D-alanine, D-phenylalanine and D-serine. Mediates electron transport from D-proline to coenzyme Q1 in vitro, and is involved in the electron transport chain from D-proline to the c-type cytochrome in vivo. In Helicobacter pylori (strain ATCC 700392 / 26695) (Campylobacter pylori), this protein is D-amino acid dehydrogenase.